Reading from the N-terminus, the 519-residue chain is Serine/threonine-protein kinase RIO3 (519 aa).

Phosphoserine is present on residues serine 8 and serine 112. The disordered stretch occupies residues 121–159 (PYEDSDSSEDEVDWQDTRDDPYRPAKPVPTPKKGFIGKG). The residue at position 122 (tyrosine 122) is a Phosphotyrosine. Over residues 124–134 (DSDSSEDEVDW) the composition is skewed to acidic residues. Residues serine 125, serine 127, and serine 128 each carry the phosphoserine modification. Positions 251–519 (ETITGCISTG…DGDPPLLYDE (269 aa)) constitute a Protein kinase domain. ATP contacts are provided by residues 257–265 (ISTGKESVV) and lysine 290. The Proton acceptor role is filled by aspartate 406.

The protein belongs to the protein kinase superfamily. RIO-type Ser/Thr kinase family. Interacts with CASP10. Interacts with IRF3; RIOK3 probably mediates the interaction of TBK1 with IRF3. Associated with 40S pre-ribosomal particles. It depends on Mg(2+) as a cofactor. Post-translationally, autophosphorylated (in vitro). Widely expressed.

Its subcellular location is the cytoplasm. It catalyses the reaction L-seryl-[protein] + ATP = O-phospho-L-seryl-[protein] + ADP + H(+). The catalysed reaction is L-threonyl-[protein] + ATP = O-phospho-L-threonyl-[protein] + ADP + H(+). Involved in regulation of type I interferon (IFN)-dependent immune response which plays a critical role in the innate immune response against DNA and RNA viruses. May act as an adapter protein essential for the recruitment of TBK1 to IRF3. Phosphorylates IFIH1 on 'Ser-828' interfering with IFIH1 filament assembly on long dsRNA and resulting in attenuated IFIH1-signaling. Can inhibit CASP10 isoform 7-mediated activation of the NF-kappaB signaling pathway. May play a role in the biogenesis of the 40S ribosomal subunit. Involved in the processing of 21S pre-rRNA to the mature 18S rRNA. The sequence is that of Serine/threonine-protein kinase RIO3 (RIOK3) from Homo sapiens (Human).